Consider the following 309-residue polypeptide: Ornithine carbamoyltransferase (309 aa).

Carbamoyl phosphate contacts are provided by residues 56–59 (STRT), glutamine 83, arginine 107, and 134–137 (HPCQ). L-ornithine contacts are provided by residues asparagine 165, aspartate 223, and 227–228 (SM). Residues 263–264 (CL) and arginine 291 each bind carbamoyl phosphate.

The protein belongs to the aspartate/ornithine carbamoyltransferase superfamily. OTCase family.

The protein localises to the cytoplasm. It catalyses the reaction carbamoyl phosphate + L-ornithine = L-citrulline + phosphate + H(+). Its pathway is amino-acid biosynthesis; L-arginine biosynthesis; L-arginine from L-ornithine and carbamoyl phosphate: step 1/3. Its function is as follows. Reversibly catalyzes the transfer of the carbamoyl group from carbamoyl phosphate (CP) to the N(epsilon) atom of ornithine (ORN) to produce L-citrulline. The chain is Ornithine carbamoyltransferase from Burkholderia mallei (strain ATCC 23344).